Reading from the N-terminus, the 207-residue chain is Large ribosomal subunit protein uL4 (207 aa).

The tract at residues 49–78 (HAVKNRSAVSGGGRKPWRQKGTGRARQGSI) is disordered.

Belongs to the universal ribosomal protein uL4 family. Part of the 50S ribosomal subunit.

In terms of biological role, one of the primary rRNA binding proteins, this protein initially binds near the 5'-end of the 23S rRNA. It is important during the early stages of 50S assembly. It makes multiple contacts with different domains of the 23S rRNA in the assembled 50S subunit and ribosome. Its function is as follows. Forms part of the polypeptide exit tunnel. The chain is Large ribosomal subunit protein uL4 from Streptococcus equi subsp. zooepidemicus (strain MGCS10565).